The following is a 298-amino-acid chain: Acetyl-coenzyme A carboxylase carboxyl transferase subunit beta 1 (298 aa).

One can recognise a CoA carboxyltransferase N-terminal domain in the interval 26-294; that stretch reads MWVKCPSCGD…RAADVQNAPA (269 aa). Cys-30, Cys-33, Cys-49, and Cys-51 together coordinate Zn(2+). The segment at 30 to 51 adopts a C4-type zinc-finger fold; it reads CPSCGDLIYTRQFSDNLKVCKC.

This sequence belongs to the AccD/PCCB family. As to quaternary structure, acetyl-CoA carboxylase is a heterohexamer composed of biotin carboxyl carrier protein (AccB), biotin carboxylase (AccC) and two subunits each of ACCase subunit alpha (AccA) and ACCase subunit beta (AccD). Zn(2+) serves as cofactor.

The protein resides in the cytoplasm. It carries out the reaction N(6)-carboxybiotinyl-L-lysyl-[protein] + acetyl-CoA = N(6)-biotinyl-L-lysyl-[protein] + malonyl-CoA. The protein operates within lipid metabolism; malonyl-CoA biosynthesis; malonyl-CoA from acetyl-CoA: step 1/1. Its function is as follows. Component of the acetyl coenzyme A carboxylase (ACC) complex. Biotin carboxylase (BC) catalyzes the carboxylation of biotin on its carrier protein (BCCP) and then the CO(2) group is transferred by the transcarboxylase to acetyl-CoA to form malonyl-CoA. The polypeptide is Acetyl-coenzyme A carboxylase carboxyl transferase subunit beta 1 (Roseiflexus castenholzii (strain DSM 13941 / HLO8)).